The sequence spans 216 residues: NADH-quinone oxidoreductase subunit C (216 aa).

This sequence belongs to the complex I 30 kDa subunit family. In terms of assembly, NDH-1 is composed of 14 different subunits. Subunits NuoB, C, D, E, F, and G constitute the peripheral sector of the complex.

It is found in the cell inner membrane. It catalyses the reaction a quinone + NADH + 5 H(+)(in) = a quinol + NAD(+) + 4 H(+)(out). In terms of biological role, NDH-1 shuttles electrons from NADH, via FMN and iron-sulfur (Fe-S) centers, to quinones in the respiratory chain. The immediate electron acceptor for the enzyme in this species is believed to be ubiquinone. Couples the redox reaction to proton translocation (for every two electrons transferred, four hydrogen ions are translocated across the cytoplasmic membrane), and thus conserves the redox energy in a proton gradient. The polypeptide is NADH-quinone oxidoreductase subunit C (Francisella tularensis subsp. holarctica (strain FTNF002-00 / FTA)).